The chain runs to 339 residues: Dihydroorotate dehydrogenase (quinone) (339 aa).

FMN-binding positions include 64-68 (AGADK) and T88. K68 is a substrate binding site. 113 to 117 (NRNGF) provides a ligand contact to substrate. The FMN site is built by N141 and N174. N174 provides a ligand contact to substrate. S177 (nucleophile) is an active-site residue. Residue N179 participates in substrate binding. Positions 219 and 247 each coordinate FMN. 248–249 (NT) serves as a coordination point for substrate. Residues G270, G299, and 320-321 (YS) each bind FMN.

The protein belongs to the dihydroorotate dehydrogenase family. Type 2 subfamily. In terms of assembly, monomer. The cofactor is FMN.

It localises to the cell membrane. It catalyses the reaction (S)-dihydroorotate + a quinone = orotate + a quinol. It functions in the pathway pyrimidine metabolism; UMP biosynthesis via de novo pathway; orotate from (S)-dihydroorotate (quinone route): step 1/1. Catalyzes the conversion of dihydroorotate to orotate with quinone as electron acceptor. The chain is Dihydroorotate dehydrogenase (quinone) (pyrD) from Pasteurella multocida (strain Pm70).